A 363-amino-acid polypeptide reads, in one-letter code: Dihydroorotate dehydrogenase (quinone) (363 aa).

Residues 77 to 81 (AGMDK) and Thr101 contribute to the FMN site. Lys81 is a binding site for substrate. 126–130 (NRMGF) contributes to the substrate binding site. FMN-binding residues include Ser155 and Asn188. Residue Asn188 participates in substrate binding. Ser191 acts as the Nucleophile in catalysis. Asn193 is a substrate binding site. 2 residues coordinate FMN: Lys234 and Thr262. 263–264 (NT) provides a ligand contact to substrate. Residues Gly287, Gly316, and 337–338 (YT) contribute to the FMN site.

The protein belongs to the dihydroorotate dehydrogenase family. Type 2 subfamily. In terms of assembly, monomer. It depends on FMN as a cofactor.

Its subcellular location is the cell membrane. The enzyme catalyses (S)-dihydroorotate + a quinone = orotate + a quinol. It functions in the pathway pyrimidine metabolism; UMP biosynthesis via de novo pathway; orotate from (S)-dihydroorotate (quinone route): step 1/1. In terms of biological role, catalyzes the conversion of dihydroorotate to orotate with quinone as electron acceptor. In Chloroflexus aurantiacus (strain ATCC 29366 / DSM 635 / J-10-fl), this protein is Dihydroorotate dehydrogenase (quinone).